The chain runs to 201 residues: Large ribosomal subunit protein uL4 (201 aa).

The segment at 45–71 is disordered; it reads AQKTRAEVTGSGKKPWRQKGTGRARAG.

The protein belongs to the universal ribosomal protein uL4 family. Part of the 50S ribosomal subunit.

In terms of biological role, one of the primary rRNA binding proteins, this protein initially binds near the 5'-end of the 23S rRNA. It is important during the early stages of 50S assembly. It makes multiple contacts with different domains of the 23S rRNA in the assembled 50S subunit and ribosome. Its function is as follows. Forms part of the polypeptide exit tunnel. In Shewanella halifaxensis (strain HAW-EB4), this protein is Large ribosomal subunit protein uL4.